The chain runs to 414 residues: 2,3-diketo-5-methylthiopentyl-1-phosphate enolase (414 aa).

K99 acts as the Proton acceptor in catalysis. Substrate contacts are provided by residues K148, 174 to 177, H265, G338, and 360 to 361; these read KDDE and GG. Mg(2+) contacts are provided by K174, D176, and E177. Residue K174 is modified to N6-carboxylysine.

Belongs to the RuBisCO large chain family. Type IV subfamily. As to quaternary structure, homodimer. Mg(2+) serves as cofactor.

The enzyme catalyses 5-methylsulfanyl-2,3-dioxopentyl phosphate = 2-hydroxy-5-methylsulfanyl-3-oxopent-1-enyl phosphate. Its pathway is amino-acid biosynthesis; L-methionine biosynthesis via salvage pathway; L-methionine from S-methyl-5-thio-alpha-D-ribose 1-phosphate: step 3/6. In terms of biological role, catalyzes the enolization of 2,3-diketo-5-methylthiopentyl-1-phosphate (DK-MTP-1-P) into 2-hydroxy-3-keto-5-methylthiopentenyl-1-phosphate (HK-MTPenyl-1-P). The sequence is that of 2,3-diketo-5-methylthiopentyl-1-phosphate enolase from Bacillus mycoides (strain KBAB4) (Bacillus weihenstephanensis).